Reading from the N-terminus, the 138-residue chain is Large ribosomal subunit protein bL17 (138 aa).

The protein belongs to the bacterial ribosomal protein bL17 family. Part of the 50S ribosomal subunit. Contacts protein L32.

The polypeptide is Large ribosomal subunit protein bL17 (Methylorubrum populi (strain ATCC BAA-705 / NCIMB 13946 / BJ001) (Methylobacterium populi)).